The chain runs to 130 residues: Small ribosomal subunit protein uS11c (130 aa).

It belongs to the universal ribosomal protein uS11 family. In terms of assembly, part of the 30S ribosomal subunit.

Its subcellular location is the plastid. It localises to the chloroplast. The sequence is that of Small ribosomal subunit protein uS11c from Pyropia yezoensis (Susabi-nori).